The sequence spans 302 residues: Glutaminase (302 aa).

Residues Ser61, Asn111, Glu155, Asn162, Tyr186, Tyr238, and Val256 each coordinate substrate.

This sequence belongs to the glutaminase family. Homotetramer.

The enzyme catalyses L-glutamine + H2O = L-glutamate + NH4(+). The polypeptide is Glutaminase (Pseudomonas savastanoi pv. phaseolicola (strain 1448A / Race 6) (Pseudomonas syringae pv. phaseolicola (strain 1448A / Race 6))).